Consider the following 573-residue polypeptide: Formate--tetrahydrofolate ligase 3 (573 aa).

An ATP-binding site is contributed by 66-73 (TPLGEGKT).

It belongs to the formate--tetrahydrofolate ligase family.

The catalysed reaction is (6S)-5,6,7,8-tetrahydrofolate + formate + ATP = (6R)-10-formyltetrahydrofolate + ADP + phosphate. The protein operates within one-carbon metabolism; tetrahydrofolate interconversion. The protein is Formate--tetrahydrofolate ligase 3 of Rubrobacter xylanophilus (strain DSM 9941 / JCM 11954 / NBRC 16129 / PRD-1).